A 435-amino-acid chain; its full sequence is Endoglucanase EG-1 (435 aa).

The signal sequence occupies residues 1-20; that stretch reads MARGTALLGLTSLLLGLVNG. The residue at position 21 (Gln21) is a Pyrrolidone carboxylic acid. Cystine bridges form between Cys38–Cys44, Cys71–Cys93, and Cys83–Cys89. An N-linked (GlcNAc...) asparagine glycan is attached at Asn109. Cystine bridges form between Cys160/Cys385, Cys192/Cys215, Cys196/Cys214, Cys235/Cys254, Cys243/Cys248, and Cys259/Cys335. The active-site Nucleophile is Glu217. The active-site Proton donor is the Glu222. Asn267 carries an N-linked (GlcNAc...) asparagine glycan.

Belongs to the glycosyl hydrolase 7 (cellulase C) family.

It localises to the secreted. The catalysed reaction is Endohydrolysis of (1-&gt;4)-beta-D-glucosidic linkages in cellulose, lichenin and cereal beta-D-glucans.. Its function is as follows. The biological conversion of cellulose to glucose generally requires three types of hydrolytic enzymes: (1) Endoglucanases which cut internal beta-1,4-glucosidic bonds; (2) Exocellobiohydrolases that cut the disaccharide cellobiose from the non-reducing end of the cellulose polymer chain; (3) Beta-1,4-glucosidases which hydrolyze the cellobiose and other short cello-oligosaccharides to glucose. This Humicola insolens (Soft-rot fungus) protein is Endoglucanase EG-1 (EG-1).